The chain runs to 260 residues: Pyridoxine 5'-phosphate synthase (260 aa).

Asn-15 contributes to the 3-amino-2-oxopropyl phosphate binding site. 17–18 (DH) contributes to the 1-deoxy-D-xylulose 5-phosphate binding site. Arg-26 provides a ligand contact to 3-amino-2-oxopropyl phosphate. The Proton acceptor role is filled by His-51. The 1-deoxy-D-xylulose 5-phosphate site is built by Arg-53 and His-58. The active-site Proton acceptor is Glu-78. Thr-108 contributes to the 1-deoxy-D-xylulose 5-phosphate binding site. His-199 (proton donor) is an active-site residue. Residues Gly-200 and 221–222 (GH) each bind 3-amino-2-oxopropyl phosphate.

It belongs to the PNP synthase family. As to quaternary structure, homooctamer; tetramer of dimers.

Its subcellular location is the cytoplasm. It catalyses the reaction 3-amino-2-oxopropyl phosphate + 1-deoxy-D-xylulose 5-phosphate = pyridoxine 5'-phosphate + phosphate + 2 H2O + H(+). It functions in the pathway cofactor biosynthesis; pyridoxine 5'-phosphate biosynthesis; pyridoxine 5'-phosphate from D-erythrose 4-phosphate: step 5/5. Functionally, catalyzes the complicated ring closure reaction between the two acyclic compounds 1-deoxy-D-xylulose-5-phosphate (DXP) and 3-amino-2-oxopropyl phosphate (1-amino-acetone-3-phosphate or AAP) to form pyridoxine 5'-phosphate (PNP) and inorganic phosphate. The chain is Pyridoxine 5'-phosphate synthase from Cupriavidus pinatubonensis (strain JMP 134 / LMG 1197) (Cupriavidus necator (strain JMP 134)).